We begin with the raw amino-acid sequence, 373 residues long: Nuclear migration protein JNM1 (373 aa).

The interval Glu33–Leu53 is disordered. Ser91 bears the Phosphoserine mark. Coiled coils occupy residues Lys114–Glu139, Glu200–Asn245, and Trp331–Ala367.

In terms of assembly, component of the dynactin complex composed of at least ARP1, JNM1, NIP100 and ARP10. Dynactin comprises a short rod of ARP1 polymers attached to ARP10 at its pointed-end and probably associated with the capping protein at its barbed-end. The rod structure is implicated in dynein cargo binding. A sidearm formed by NIP100 projects from the ARP1 filament and is implicated in motor binding. Interacts with ARP1.

The protein resides in the cytoplasm. It localises to the cytoskeleton. Its function is as follows. Component of the dynactin complex which assists cytoplasmic dynein by increasing its processivity and by regulation of its cargo binding. The dynactin complex is required for the spindle translocation late in anaphase and is involved in a cell wall synthesis checkpoint. JNM1 is associated with the rod and links it to the projecting sidearm. Required for proper nuclear migration during the mitotic cell cycle and for astral microtubule development. The chain is Nuclear migration protein JNM1 (JNM1) from Saccharomyces cerevisiae (strain ATCC 204508 / S288c) (Baker's yeast).